Reading from the N-terminus, the 109-residue chain is Large ribosomal subunit protein uL22 (109 aa).

The protein belongs to the universal ribosomal protein uL22 family. In terms of assembly, part of the 50S ribosomal subunit.

Functionally, this protein binds specifically to 23S rRNA; its binding is stimulated by other ribosomal proteins, e.g. L4, L17, and L20. It is important during the early stages of 50S assembly. It makes multiple contacts with different domains of the 23S rRNA in the assembled 50S subunit and ribosome. The globular domain of the protein is located near the polypeptide exit tunnel on the outside of the subunit, while an extended beta-hairpin is found that lines the wall of the exit tunnel in the center of the 70S ribosome. The chain is Large ribosomal subunit protein uL22 from Neisseria gonorrhoeae (strain ATCC 700825 / FA 1090).